The sequence spans 266 residues: Gasdermin bGSDM (266 aa).

A lipid anchor (S-palmitoyl cysteine) is attached at C3. 4 beta stranded membrane-spanning segments follow: residues 69-85 (ISGQRTGDLSVGVGLSI), 97-115 (KLGLDTKYQNAKTTMFEFQ), 163-180 (KFTIEAKKSDGTALELTI), and 189-205 (GNVKVSGAASVTSKICY).

The protein belongs to the bacterial gasdermin family. In terms of assembly, monomer. Forms large, homooligomeric ring-shaped pores when inserted in membranes. Post-translationally, palmitoylation helps stabilize the inactive state; may self palmitoylate. Palmitoylation plays a significant role in pore formation.

It localises to the cytoplasm. The protein localises to the cell inner membrane. The full-length protein before cleavage is inactive: intramolecular interactions between the N-terminal domain and the C-terminal region as well as the lipid modification, mediate autoinhibition. The pyroptosis-like-inducing activity is carried by the released N-terminal domain (Gasdermin bGSDM, N-terminus). In terms of biological role, precursor of a pore-forming protein involved in defense against bacteriophages. Expression of bGSDM and the neighboring protease gene (Ga0182885_104520) is toxic in E.coli. Cleavage of this precursor by its dedicated protease releases the active moiety (gasdermin bGSDM, N-terminus) which inserts into membranes, forming pores and triggering cell death. Pore-forming protein that causes membrane permeabilization via a pyroptosis-like activity. Makes ring-like pores when released. In Desulfuromonadales bacterium, this protein is Gasdermin bGSDM.